The sequence spans 545 residues: Beta-sesquiphellandrene synthase (545 aa).

Residues Asp-299, Asp-303, Asn-443, Ser-447, and Glu-451 each coordinate Mg(2+). A DDXXD motif motif is present at residues 299 to 303 (DDIMD).

Belongs to the terpene synthase family. Mg(2+) is required as a cofactor. The cofactor is Mn(2+).

The protein localises to the cytoplasm. The catalysed reaction is (2E,6E)-farnesyl diphosphate = beta-sesquiphellandrene + diphosphate. It functions in the pathway secondary metabolite biosynthesis; terpenoid biosynthesis. Sesquiterpene synthase converting farnesyl diphosphate into beta-sesquiphellandrene and six minor products, zingiberene, 7-epi-sesquithujene, sesquisabinene A, (E)-alpha-bergamotene, (E)-beta-farnesene and beta-bisabolene. Can also accept geranyl diphosphate as substrate, producing nine monoterpenes, with myrcene and limonene as the major products. This chain is Beta-sesquiphellandrene synthase (TPS2), found in Sorghum bicolor (Sorghum).